The following is a 334-amino-acid chain: Glyoxylate reductase (334 aa).

NADP(+) is bound by residues 158–161, 180–182, and 239–241; these read LGRI, SRT, and IAR. Active-site residues include Arg241 and Glu270. Catalysis depends on His288, which acts as the Proton donor. 288–290 is an NADP(+) binding site; the sequence is HIG.

This sequence belongs to the D-isomer specific 2-hydroxyacid dehydrogenase family. GyaR subfamily. Homodimer.

Its subcellular location is the cytoplasm. The catalysed reaction is glycolate + NAD(+) = glyoxylate + NADH + H(+). This chain is Glyoxylate reductase (gyaR), found in Pyrococcus horikoshii (strain ATCC 700860 / DSM 12428 / JCM 9974 / NBRC 100139 / OT-3).